The primary structure comprises 698 residues: Zinc finger CCCH domain-containing protein 7 (698 aa).

Residues 1 to 11 are compositionally biased toward pro residues; that stretch reads MEEPSPVPPAA. Disordered regions lie at residues 1–23, 56–95, 109–137, and 272–300; these read MEEPSPVPPAAAPASLAAAPPTT, HAARPDAEVEPAAAAAIPPGGSGGLPHGDSPPPADVGGDR, APHETPSTSASPDAAVNPTTDPGVVPQGT, and GSLDGGGGFEEGEIEGDTQNLDADDSGNS. Low complexity-rich tracts occupy residues 12–21 and 65–74; these read APASLAAAPP and EPAAAAAIPP. Residues 281 to 300 show a composition bias toward acidic residues; sequence EEGEIEGDTQNLDADDSGNS. 3 consecutive C3H1-type zinc fingers follow at residues 429-456, 458-485, and 486-511; these read PKVVKVCHFYLHGKCQQGNLCKFSHDTT, LTKSKPCTHYARGSCLKGDDCPYDHELS, and KYPCHNFMENGMCIRGDKCKFSHVIP. Disordered regions lie at residues 512–553 and 607–682; these read TAEG…GEPA and TEKH…QHEV. Composition is skewed to polar residues over residues 535–548 and 665–680; these read CQEQTSRQKTSTVY and SLPTTAAVPSSVSTQH.

This chain is Zinc finger CCCH domain-containing protein 7, found in Oryza sativa subsp. japonica (Rice).